The primary structure comprises 208 residues: V-type ATP synthase subunit D (208 aa).

It belongs to the V-ATPase D subunit family.

Produces ATP from ADP in the presence of a proton gradient across the membrane. The sequence is that of V-type ATP synthase subunit D from Chlamydia abortus (strain DSM 27085 / S26/3) (Chlamydophila abortus).